A 461-amino-acid polypeptide reads, in one-letter code: Serine carboxypeptidase-like 51 (461 aa).

The first 20 residues, 1-20, serve as a signal peptide directing secretion; sequence MKTTVVYLVILCLIVSCTNG. N-linked (GlcNAc...) asparagine glycans are attached at residues N99 and N152. The active site involves S166. N340 is a glycosylation site (N-linked (GlcNAc...) asparagine). Active-site residues include D379 and H438.

Belongs to the peptidase S10 family. Expressed in seedlings, roots, flowers and siliques.

It is found in the secreted. Its function is as follows. Probable carboxypeptidase. In Arabidopsis thaliana (Mouse-ear cress), this protein is Serine carboxypeptidase-like 51 (SCPL51).